Here is a 388-residue protein sequence, read N- to C-terminus: GTPase Obg (388 aa).

The region spanning 1–159 is the Obg domain; sequence MKFVDEAVIK…RELRLELLLL (159 aa). Residues 160–333 enclose the OBG-type G domain; the sequence is ADVGMLGLPN…LCYKLADFME (174 aa). GTP-binding positions include 166–173, 191–195, 213–216, 283–286, and 314–316; these read GLPNAGKS, FTTLI, DIPG, NKVD, and SAV. S173 and T193 together coordinate Mg(2+). The segment at 359 to 380 is disordered; that stretch reads NQGEVITEDDDDWDDWDDEEDD. A compositionally biased stretch (acidic residues) spans 364–380; that stretch reads ITEDDDDWDDWDDEEDD.

This sequence belongs to the TRAFAC class OBG-HflX-like GTPase superfamily. OBG GTPase family. In terms of assembly, monomer. Mg(2+) is required as a cofactor.

It localises to the cytoplasm. An essential GTPase which binds GTP, GDP and possibly (p)ppGpp with moderate affinity, with high nucleotide exchange rates and a fairly low GTP hydrolysis rate. Plays a role in control of the cell cycle, stress response, ribosome biogenesis and in those bacteria that undergo differentiation, in morphogenesis control. The sequence is that of GTPase Obg from Vibrio vulnificus (strain YJ016).